The primary structure comprises 407 residues: Serine/threonine transporter SstT (407 aa).

9 consecutive transmembrane segments (helical) span residues 11-31 (IIHG…VILA), 43-63 (FLGD…VFVL), 82-102 (IISL…LLSF), 141-161 (ALMT…GIAL), 192-212 (LGIF…ALAG), 216-236 (LLMV…PLIV), 298-318 (MGGA…TLGV), 339-359 (ASGV…LFGI), and 363-383 (IAMQ…SAET).

Belongs to the dicarboxylate/amino acid:cation symporter (DAACS) (TC 2.A.23) family.

It is found in the cell inner membrane. It catalyses the reaction L-serine(in) + Na(+)(in) = L-serine(out) + Na(+)(out). It carries out the reaction L-threonine(in) + Na(+)(in) = L-threonine(out) + Na(+)(out). Functionally, involved in the import of serine and threonine into the cell, with the concomitant import of sodium (symport system). This is Serine/threonine transporter SstT from Shewanella denitrificans (strain OS217 / ATCC BAA-1090 / DSM 15013).